Reading from the N-terminus, the 165-residue chain is Anaerobic nitrite reductase GLB1 (165 aa).

A Globin domain is found at 12–162 (VFGEEQEALV…LVAAIKREMK (151 aa)). Positions 45–49 (EIAPS) match the Homodimerization motif. 6 residues coordinate heme b: Ser55, Lys69, His73, Arg103, Thr107, and His108. The short motif at 115–127 (DGHFEVTGFALLE) is the Homodimerization element.

It belongs to the plant globin family. In terms of assembly, homodimer. The cofactor is heme b. In terms of tissue distribution, in vegetative but not in embryonic organs.

The protein localises to the cytoplasm. It is found in the nucleus. The catalysed reaction is Fe(III)-heme b-[protein] + nitric oxide + H2O = Fe(II)-heme b-[protein] + nitrite + 2 H(+). Phytoglobin that reduces nitrite to nitric oxide (NO) under anoxic conditions (e.g. during flooding or in waterlogged soil). May not function as an oxygen storage or transport protein. Has an unusually high affinity for O(2) through an hexacoordinate heme iron because of a very low dissociation constant. The sequence is that of Anaerobic nitrite reductase GLB1 (HB) from Zea mays subsp. parviglumis (Balsas teosinte).